Here is a 328-residue protein sequence, read N- to C-terminus: Putative P2Y purinoceptor 10 (328 aa).

Residues 1–27 (MGSNSTSSAESNCNATYLPFQYSLYAT) lie on the Extracellular side of the membrane. Asparagine 4 and asparagine 14 each carry an N-linked (GlcNAc...) asparagine glycan. A helical membrane pass occupies residues 28 to 48 (TYIFIFIPGLLANSAALWVLC). Residues 49 to 56 (RFISKKNK) are Cytoplasmic-facing. A helical transmembrane segment spans residues 57 to 77 (AIIFMINLSVADLAHILSLPL). Residues 78–91 (RIYYYINRHWPFQR) lie on the Extracellular side of the membrane. A helical transmembrane segment spans residues 92-112 (ALCLLCFYLKYLNMYASIFFL). A disulfide bridge links cysteine 94 with cysteine 170. Residues 113–137 (TCISLQRCLFLLKPFRARNWKRRYD) are Cytoplasmic-facing. Residues 138 to 158 (VGISAVIWIVVGTACLPFPIL) traverse the membrane as a helical segment. Residues 159–182 (RNAGLANSTDSCFADLGYKQMDAV) are Extracellular-facing. A helical transmembrane segment spans residues 183–203 (VLVTMVVIAELAGFVIPVITI). Over 204 to 233 (ACCTWKTTVSLKHPPIAFQGISERKKALRM) the chain is Cytoplasmic. The helical transmembrane segment at 234–254 (VFMCAAVFVICFTPYHINFIF) threads the bilayer. Topologically, residues 255-277 (YTMVKESIITSCPTVKSTLYFHP) are extracellular. The helical transmembrane segment at 278 to 298 (FSLCLASLCCLLDPILYYFMA) threads the bilayer. At 299-328 (SEFRDQLSRHGSSVTRSRLMSRESGSSMVN) the chain is on the cytoplasmic side.

This sequence belongs to the G-protein coupled receptor 1 family.

It localises to the cell membrane. Its function is as follows. Putative receptor for purines coupled to G-proteins. The polypeptide is Putative P2Y purinoceptor 10 (P2ry10) (Mus musculus (Mouse)).